The sequence spans 552 residues: Berberine bridge enzyme-like 6 (552 aa).

The N-terminal stretch at 1–16 is a signal peptide; that stretch reads MKEAFVFLLCLTNKFP. Residues Cys56 and Cys119 are joined by a disulfide bond. 6 N-linked (GlcNAc...) asparagine glycosylation sites follow: Asn76, Asn161, Asn280, Asn364, Asn419, and Asn463. The 178-residue stretch at 93-270 folds into the FAD-binding PCMH-type domain; it reads FSSPNFKKLL…LSWKINLVEV (178 aa). Residues 134–196 constitute a cross-link (6-(S-cysteinyl)-8alpha-(pros-histidyl)-FAD (His-Cys)); sequence HDNEGFSYMS…QTLAFPAGVC (63 aa).

It belongs to the oxygen-dependent FAD-linked oxidoreductase family. The cofactor is FAD. In terms of processing, the FAD cofactor is bound via a bicovalent 6-S-cysteinyl, 8alpha-N1-histidyl FAD linkage.

The protein resides in the secreted. It localises to the cell wall. Its function is as follows. Probable flavin-dependent oxidoreductase. In Arabidopsis thaliana (Mouse-ear cress), this protein is Berberine bridge enzyme-like 6.